A 233-amino-acid polypeptide reads, in one-letter code: Large ribosomal subunit protein uL1 (233 aa).

Belongs to the universal ribosomal protein uL1 family. As to quaternary structure, part of the 50S ribosomal subunit.

Its function is as follows. Binds directly to 23S rRNA. The L1 stalk is quite mobile in the ribosome, and is involved in E site tRNA release. Protein L1 is also a translational repressor protein, it controls the translation of the L11 operon by binding to its mRNA. The sequence is that of Large ribosomal subunit protein uL1 from Aeromonas salmonicida (strain A449).